Here is a 970-residue protein sequence, read N- to C-terminus: Phosphoenolpyruvate carboxylase 1 (970 aa).

Phosphoserine is present on Ser15. Residues His177, Lys606, and Arg647 contribute to the active site.

This sequence belongs to the PEPCase type 1 family. As to quaternary structure, homotetramer. Mg(2+) serves as cofactor.

The protein resides in the cytoplasm. The catalysed reaction is oxaloacetate + phosphate = phosphoenolpyruvate + hydrogencarbonate. It participates in photosynthesis; C4 acid pathway. Its activity is regulated as follows. By light-reversible phosphorylation. Through the carboxylation of phosphoenolpyruvate (PEP) it forms oxaloacetate, a four-carbon dicarboxylic acid source for the tricarboxylic acid cycle. In Zea mays (Maize), this protein is Phosphoenolpyruvate carboxylase 1 (PEP1).